Consider the following 165-residue polypeptide: 2-halobenzoate 1,2-dioxygenase small subunit (165 aa).

Belongs to the bacterial ring-hydroxylating dioxygenase beta subunit family. As to quaternary structure, heterohexamer of 3 large (CbdA) subunits and 3 small (CbdB) subunits. The heterohexamer is part of 2-halobenzoate dioxygenase two component enzyme system. The other component is a NADH:acceptor reductase (CdbC).

It carries out the reaction a 2-halobenzoate + NADH + O2 + H(+) = a halide anion + catechol + CO2 + NAD(+). It functions in the pathway xenobiotic degradation; benzoate degradation via CoA ligation. In terms of biological role, component of 2-halobenzoate dioxygenase multicomponent enzyme system which catalyzes the incorporation of both atoms of molecular oxygen into 2-halobenzoate to form catechol. The polypeptide is 2-halobenzoate 1,2-dioxygenase small subunit (cbdB) (Burkholderia cepacia (Pseudomonas cepacia)).